A 717-amino-acid polypeptide reads, in one-letter code: Fatty acid oxidation complex subunit alpha (717 aa).

The tract at residues 1-190 (MIHAGNAITV…KDGAVDAVVA (190 aa)) is enoyl-CoA hydratase/isomerase. D298 contacts substrate. The tract at residues 313–717 (HPVNQAAVLG…MAANNKKFYG (405 aa)) is 3-hydroxyacyl-CoA dehydrogenase. NAD(+) is bound by residues M326, D345, 402–404 (VTE), K409, and S431. The active-site For 3-hydroxyacyl-CoA dehydrogenase activity is H452. N455 provides a ligand contact to NAD(+). N502 contacts substrate.

In the N-terminal section; belongs to the enoyl-CoA hydratase/isomerase family. This sequence in the C-terminal section; belongs to the 3-hydroxyacyl-CoA dehydrogenase family. Heterotetramer of two alpha chains (FadB) and two beta chains (FadA).

It carries out the reaction a (3S)-3-hydroxyacyl-CoA + NAD(+) = a 3-oxoacyl-CoA + NADH + H(+). The enzyme catalyses a (3S)-3-hydroxyacyl-CoA = a (2E)-enoyl-CoA + H2O. It catalyses the reaction a 4-saturated-(3S)-3-hydroxyacyl-CoA = a (3E)-enoyl-CoA + H2O. The catalysed reaction is (3S)-3-hydroxybutanoyl-CoA = (3R)-3-hydroxybutanoyl-CoA. It carries out the reaction a (3Z)-enoyl-CoA = a 4-saturated (2E)-enoyl-CoA. The enzyme catalyses a (3E)-enoyl-CoA = a 4-saturated (2E)-enoyl-CoA. It functions in the pathway lipid metabolism; fatty acid beta-oxidation. Involved in the aerobic and anaerobic degradation of long-chain fatty acids via beta-oxidation cycle. Catalyzes the formation of 3-oxoacyl-CoA from enoyl-CoA via L-3-hydroxyacyl-CoA. It can also use D-3-hydroxyacyl-CoA and cis-3-enoyl-CoA as substrate. The chain is Fatty acid oxidation complex subunit alpha from Acinetobacter baumannii (strain AB307-0294).